A 445-amino-acid polypeptide reads, in one-letter code: Gamma-glutamyl phosphate reductase (445 aa).

This sequence belongs to the gamma-glutamyl phosphate reductase family.

The protein localises to the cytoplasm. The enzyme catalyses L-glutamate 5-semialdehyde + phosphate + NADP(+) = L-glutamyl 5-phosphate + NADPH + H(+). It functions in the pathway amino-acid biosynthesis; L-proline biosynthesis; L-glutamate 5-semialdehyde from L-glutamate: step 2/2. In terms of biological role, catalyzes the NADPH-dependent reduction of L-glutamate 5-phosphate into L-glutamate 5-semialdehyde and phosphate. The product spontaneously undergoes cyclization to form 1-pyrroline-5-carboxylate. The protein is Gamma-glutamyl phosphate reductase of Synechococcus sp. (strain RCC307).